Reading from the N-terminus, the 414-residue chain is Phthiocerol/phthiodiolone dimycocerosyl transferase (414 aa).

H118 serves as the catalytic Proton acceptor.

Belongs to the acyltransferase PapA5 family. In terms of assembly, monomer. Interacts directly with the acyl carrier protein (ACP) domain of the mycocerosic acid synthase (mas) protein.

It catalyses the reaction 2 a mycocerosyl-[mycocerosic acid synthase] + a phthiocerol = a dimycocerosyl phthiocerol + 2 holo-[mycocerosic acid synthase].. The enzyme catalyses 2 a mycocerosyl-[mycocerosic acid synthase] + a phthiodiolone = a dimycocerosyl phthiodiolone + 2 holo-[mycocerosic acid synthase].. The catalysed reaction is 2 a mycocerosyl-[mycocerosic acid synthase] + a phenolphthiocerol = a dimycocerosyl phenolphthiocerol + 2 holo-[mycocerosic acid synthase].. Its function is as follows. Catalyzes diesterification of phthiocerol, phthiodiolone, and phenolphthiocerol with mycocerosic acids, the final step in the phthiocerol, phthiodiolone and phenolphthiocerol dimycocerosate esters (PDIM) synthesis. Can directly transfer the mycocerosate bound to the mycocerosic acid synthase (mas) onto the substrate alcohols. The protein is Phthiocerol/phthiodiolone dimycocerosyl transferase (papA5) of Mycobacterium ulcerans (strain Agy99).